The sequence spans 105 residues: UPF0122 protein OB1530 (105 aa).

This sequence belongs to the UPF0122 family.

In terms of biological role, might take part in the signal recognition particle (SRP) pathway. This is inferred from the conservation of its genetic proximity to ftsY/ffh. May be a regulatory protein. The chain is UPF0122 protein OB1530 from Oceanobacillus iheyensis (strain DSM 14371 / CIP 107618 / JCM 11309 / KCTC 3954 / HTE831).